Reading from the N-terminus, the 611-residue chain is Threonine--tRNA ligase (611 aa).

A disordered region spans residues 1-27 (MAGPEPEPVSSAAATTPAPSAPVVLPK). Low complexity predominate over residues 8-24 (PVSSAAATTPAPSAPVV). The tract at residues 209 to 502 (DHRRIGKDLD…MTENYAGDYP (294 aa)) is catalytic. Zn(2+)-binding residues include Cys302, His353, and His479.

The protein belongs to the class-II aminoacyl-tRNA synthetase family. In terms of assembly, homodimer. Zn(2+) serves as cofactor.

The protein resides in the cytoplasm. It carries out the reaction tRNA(Thr) + L-threonine + ATP = L-threonyl-tRNA(Thr) + AMP + diphosphate + H(+). In terms of biological role, catalyzes the attachment of threonine to tRNA(Thr) in a two-step reaction: L-threonine is first activated by ATP to form Thr-AMP and then transferred to the acceptor end of tRNA(Thr). Also edits incorrectly charged L-seryl-tRNA(Thr). The polypeptide is Threonine--tRNA ligase (Synechococcus sp. (strain CC9605)).